The sequence spans 461 residues: Fumarate hydratase class II (461 aa).

Residues 98 to 100, 129 to 132, 139 to 141, and T187 contribute to the substrate site; these read SGT, HPND, and SSN. Residues 120–140 form a disordered region; the sequence is SKKGGKSPVHPNDHVNKGQSS. Catalysis depends on H188, which acts as the Proton donor/acceptor. S318 is a catalytic residue. Substrate-binding positions include S319 and 324–326; that span reads KVN.

It belongs to the class-II fumarase/aspartase family. Fumarase subfamily. Homotetramer.

Its subcellular location is the cytoplasm. It catalyses the reaction (S)-malate = fumarate + H2O. It functions in the pathway carbohydrate metabolism; tricarboxylic acid cycle; (S)-malate from fumarate: step 1/1. In terms of biological role, involved in the TCA cycle. Catalyzes the stereospecific interconversion of fumarate to L-malate. The protein is Fumarate hydratase class II of Rickettsia felis (strain ATCC VR-1525 / URRWXCal2) (Rickettsia azadi).